We begin with the raw amino-acid sequence, 338 residues long: Sporulation protein YdcC (338 aa).

A helical transmembrane segment spans residues 8 to 25 (FVLLLTGLLAVLILSACG).

It localises to the cell membrane. Functionally, required for efficient sporulation. The sequence is that of Sporulation protein YdcC (ydcC) from Bacillus subtilis (strain 168).